We begin with the raw amino-acid sequence, 205 residues long: Type-4 uracil-DNA glycosylase (205 aa).

Residues Cys-13 and Cys-16 each contribute to the [4Fe-4S] cluster site. Uracil-binding positions include 40–42, Phe-54, and Asn-80; that span reads GEG. [4Fe-4S] cluster-binding residues include Cys-84 and Cys-100. His-155 contributes to the uracil binding site.

It belongs to the uracil-DNA glycosylase (UDG) superfamily. Type 4 (UDGa) family. Monomer.

The enzyme catalyses Hydrolyzes single-stranded DNA or mismatched double-stranded DNA and polynucleotides, releasing free uracil.. With respect to regulation, product-inhibited by apurinic/apyrimidinic sites. In terms of biological role, removes uracil bases that are present in DNA as a result of either deamination of cytosine or misincorporation of dUMP instead of dTMP. Can remove uracil from double-stranded DNA containing either a U/G, U/A, U/C or U/T base pair as well as from single-stranded DNA. Specifically recognizes uracil that is flipped out from double-stranded DNA. The chain is Type-4 uracil-DNA glycosylase from Thermus thermophilus (strain ATCC 27634 / DSM 579 / HB8).